A 278-amino-acid polypeptide reads, in one-letter code: RsbT co-antagonist protein RsbRD (278 aa).

Positions S160–K271 constitute an STAS domain. T181 is modified (phosphothreonine).

In terms of assembly, probably present in the stressosome with RsbRA, RsbRB, RsbRC and RsbS. In terms of processing, phosphorylated by RsbT.

One of 4 functionally non-identical RsbR paralogs, it functions in the environmental signaling branch of the general stress response. Functionally, negative regulator of sigma-B activity. Non-phosphorylated RsbS binds to RsbT, preventing its association with RsbU. Requires any one of RsbRA, RsbRB, RsbRC or RsbRD to sequester RsbT. When RsbS and the RsbR paralog(s) are phosphorylated, they release RsbT, which can then bind and activate RsbU. This chain is RsbT co-antagonist protein RsbRD (rsbRD), found in Bacillus subtilis (strain 168).